Consider the following 575-residue polypeptide: Melatonin-related receptor (575 aa).

Over Met1–Phe30 the chain is Extracellular. The helical transmembrane segment at Met31–Leu51 threads the bilayer. At Ala52 to Asn64 the chain is on the cytoplasmic side. The helical transmembrane segment at Val65–Met85 threads the bilayer. At Leu86–Met103 the chain is on the extracellular side. Cys101 and Cys178 are joined by a disulfide. Residues Val104–Ile124 traverse the membrane as a helical segment. The Cytoplasmic segment spans residues Asn125–Arg143. The chain crosses the membrane as a helical span at residues Asn144 to Met164. Over Tyr165–Phe188 the chain is Extracellular. A helical membrane pass occupies residues Ala189–Val209. Residues Lys210–Met239 are Cytoplasmic-facing. Residues Phe240–Val260 traverse the membrane as a helical segment. Residues Ala261–Asn273 lie on the Extracellular side of the membrane. Residues Trp274 to Tyr294 form a helical membrane-spanning segment. Over Gly295 to Val575 the chain is Cytoplasmic. 2 disordered regions span residues Val368–Pro421 and Ser446–Thr474. The segment covering Pro455 to Thr474 has biased composition (polar residues).

Belongs to the G-protein coupled receptor 1 family. Homodimer, and heterodimer with MTNR1A and MTNR1B. Interacts with KAT5. Interacts with RTN4 isoform A/NOGO-A. Interacts with TGFBR1.

The protein localises to the cell membrane. G protein-coupled receptor that plays a role in numerous physiological processes including regulation of energy metabolism, neurite outgrowth or cell migration. Promotes self-renewal and neuronal differentiation of neural progenitor cells through activation of the NOTCH and WNT/beta-catenin signaling pathways. Modulates the KAT5-dependent glucocorticoid receptor signaling by modulating KAT5 subcellular compartmentalisation. Also plays a role in the activation TGFBR1 in the absence of TGFBR2 by interfering with FKBP1A binding to TGFBR1, leading to induction of both canonical and non-canonical SMAD signaling pathways resulting in inhibition of proliferation or promotion of migration. This chain is Melatonin-related receptor (GPR50), found in Ovis aries (Sheep).